A 272-amino-acid polypeptide reads, in one-letter code: Shikimate dehydrogenase (NADP(+)) (272 aa).

Residues 14 to 16 (SKS) and T61 contribute to the shikimate site. Residue K65 is the Proton acceptor of the active site. Residue E77 coordinates NADP(+). 2 residues coordinate shikimate: N86 and D102. Residues 126 to 130 (GAGGA), 149 to 154 (NRTASR), and M213 each bind NADP(+). Y215 is a binding site for shikimate. G237 is a binding site for NADP(+).

It belongs to the shikimate dehydrogenase family. Homodimer.

It catalyses the reaction shikimate + NADP(+) = 3-dehydroshikimate + NADPH + H(+). It participates in metabolic intermediate biosynthesis; chorismate biosynthesis; chorismate from D-erythrose 4-phosphate and phosphoenolpyruvate: step 4/7. Its function is as follows. Involved in the biosynthesis of the chorismate, which leads to the biosynthesis of aromatic amino acids. Catalyzes the reversible NADPH linked reduction of 3-dehydroshikimate (DHSA) to yield shikimate (SA). The sequence is that of Shikimate dehydrogenase (NADP(+)) from Salmonella enteritidis PT4 (strain P125109).